Consider the following 299-residue polypeptide: Mitochondrial 2-oxodicarboxylate carrier (299 aa).

Solcar repeat units lie at residues 11 to 100 (REAS…YKKL), 107 to 196 (SPAL…VKNM), and 205 to 294 (LEFL…TYSW). A run of 6 helical transmembrane segments spans residues 17–37 (IVAG…LDVV), 70–89 (FGFY…KRAV), 113–133 (TIAG…FEVV), 167–187 (GLNK…MVYF), 205–225 (LEFL…SVIN), and 277–297 (LGPG…WLQE).

Belongs to the mitochondrial carrier (TC 2.A.29) family.

It is found in the mitochondrion inner membrane. It carries out the reaction 2-oxoadipate(in) + 2-oxoglutarate(out) = 2-oxoadipate(out) + 2-oxoglutarate(in). The catalysed reaction is hexanedioate(in) + 2-oxoglutarate(out) = hexanedioate(out) + 2-oxoglutarate(in). The enzyme catalyses L-2-aminoadipate(in) + 2-oxoglutarate(out) = L-2-aminoadipate(out) + 2-oxoglutarate(in). It catalyses the reaction glutarate(in) + 2-oxoglutarate(out) = glutarate(out) + 2-oxoglutarate(in). It carries out the reaction 2-oxoheptanedioate(in) + 2-oxoglutarate(out) = 2-oxoheptanedioate(out) + 2-oxoglutarate(in). The catalysed reaction is heptanedioate(in) + 2-oxoglutarate(out) = heptanedioate(out) + 2-oxoglutarate(in). The enzyme catalyses citrate(in) + 2-oxoglutarate(out) = citrate(out) + 2-oxoglutarate(in). In terms of biological role, transports dicarboxylates across the inner membranes of mitochondria by a counter-exchange mechanism. Can transport 2-oxoadipate (2-oxohexanedioate), 2-oxoglutarate, adipate (hexanedioate), glutarate, and to a lesser extent, pimelate (heptanedioate), 2-oxopimelate (2-oxoheptanedioate), 2-aminoadipate (2-aminohexanedioate), oxaloacetate, and citrate. Plays a central role in catabolism of lysine, hydroxylysine, and tryptophan, by transporting common metabolite intermediates (such as 2-oxoadipate) into the mitochondria, where it is converted into acetyl-CoA and can enter the citric acid (TCA) cycle. The polypeptide is Mitochondrial 2-oxodicarboxylate carrier (SLC25A21) (Pongo abelii (Sumatran orangutan)).